The primary structure comprises 366 residues: Alanine racemase (366 aa).

Lys40 acts as the Proton acceptor; specific for D-alanine in catalysis. Lys40 bears the N6-(pyridoxal phosphate)lysine mark. Arg136 contacts substrate. Tyr263 (proton acceptor; specific for L-alanine) is an active-site residue. A substrate-binding site is contributed by Met310.

The protein belongs to the alanine racemase family. The cofactor is pyridoxal 5'-phosphate.

It catalyses the reaction L-alanine = D-alanine. The protein operates within amino-acid biosynthesis; D-alanine biosynthesis; D-alanine from L-alanine: step 1/1. Its function is as follows. Catalyzes the interconversion of L-alanine and D-alanine. May also act on other amino acids. This is Alanine racemase (alr) from Streptococcus pyogenes serotype M28 (strain MGAS6180).